A 309-amino-acid chain; its full sequence is Taste receptor type 2 member 31 (309 aa).

Residues 1–2 (MI) are Extracellular-facing. The helical transmembrane segment at 3-23 (TFLPTIFSILVVVIFVIGNFG) threads the bilayer. Over 24–55 (NGFIALVNSIEWVKRQKISFADQILTALAVSR) the chain is Cytoplasmic. Residues 56-76 (VGLLWALLLNWYSTVFNPAFY) form a helical membrane-spanning segment. At 77–100 (SVGVRTTVYDVWTVTGHFSNWLAT) the chain is on the extracellular side. The helical transmembrane segment at 101 to 121 (SLSIFYLLKIANFSNLIFLHL) threads the bilayer. Topologically, residues 122 to 126 (KRRVK) are cytoplasmic. A helical transmembrane segment spans residues 127–147 (SVILVMLLGPLLFLACQLFVI). Residues 148–181 (NMKEILRTKEYEGNMTWKIKLRSAMYLSDATITT) lie on the Extracellular side of the membrane. The N-linked (GlcNAc...) asparagine glycan is linked to asparagine 161. The chain crosses the membrane as a helical span at residues 182–202 (LANLVPFTLTLLSFLLLICSL). At 203–229 (CKHLNKMQLHGKGSQDPSTKVHIKVLQ) the chain is on the cytoplasmic side. Residues 230–250 (TVISFLLLCAIYFLSIMISVW) traverse the membrane as a helical segment. At 251–259 (SFGSLENKP) the chain is on the extracellular side. The chain crosses the membrane as a helical span at residues 260–280 (VFMFCKAIRFSYPSIHPFILI). Topologically, residues 281–309 (WGNKKLKQTFLSVLRQVRYWVKGEKPSSP) are cytoplasmic.

It belongs to the G-protein coupled receptor T2R family.

It localises to the membrane. In terms of biological role, receptor that may play a role in the perception of bitterness and is gustducin-linked. May play a role in sensing the chemical composition of the gastrointestinal content. The activity of this receptor may stimulate alpha gustducin, mediate PLC-beta-2 activation and lead to the gating of TRPM5. This chain is Taste receptor type 2 member 31 (TAS2R31), found in Pongo pygmaeus (Bornean orangutan).